The following is a 209-amino-acid chain: Vacuolar protein sorting-associated protein 28 homolog (209 aa).

The region spanning 1-105 (MSQNSNLMRE…REGRPITVKD (105 aa)) is the VPS28 N-terminal domain. The VPS28 C-terminal domain maps to 109 to 205 (NVLKHIASIV…AYQSFQKALN (97 aa)).

This sequence belongs to the VPS28 family. Component of the ESCRT-I complex (endosomal sorting complex required for transport I).

It localises to the endosome. Component of the ESCRT-I complex, a regulator of vesicular trafficking process. This Caenorhabditis briggsae protein is Vacuolar protein sorting-associated protein 28 homolog.